We begin with the raw amino-acid sequence, 208 residues long: Large ribosomal subunit protein uL3 (208 aa).

N5-methylglutamine is present on glutamine 150.

Belongs to the universal ribosomal protein uL3 family. In terms of assembly, part of the 50S ribosomal subunit. Forms a cluster with proteins L14 and L19. Post-translationally, methylated by PrmB.

One of the primary rRNA binding proteins, it binds directly near the 3'-end of the 23S rRNA, where it nucleates assembly of the 50S subunit. This is Large ribosomal subunit protein uL3 from Buchnera aphidicola subsp. Cinara cedri (strain Cc).